Here is a 291-residue protein sequence, read N- to C-terminus: Nucleotide-binding protein MSMEG_3079/MSMEI_3001 (291 aa).

Residue 14–21 participates in ATP binding; sequence GLSGAGRG. 65–68 is a GTP binding site; it reads DVRS.

Belongs to the RapZ-like family.

Its function is as follows. Displays ATPase and GTPase activities. This Mycolicibacterium smegmatis (strain ATCC 700084 / mc(2)155) (Mycobacterium smegmatis) protein is Nucleotide-binding protein MSMEG_3079/MSMEI_3001.